Here is a 264-residue protein sequence, read N- to C-terminus: GTP cyclohydrolase FolE2 (264 aa).

This sequence belongs to the GTP cyclohydrolase IV family.

It carries out the reaction GTP + H2O = 7,8-dihydroneopterin 3'-triphosphate + formate + H(+). Its pathway is cofactor biosynthesis; 7,8-dihydroneopterin triphosphate biosynthesis; 7,8-dihydroneopterin triphosphate from GTP: step 1/1. In terms of biological role, converts GTP to 7,8-dihydroneopterin triphosphate. In Ruthia magnifica subsp. Calyptogena magnifica, this protein is GTP cyclohydrolase FolE2.